A 372-amino-acid chain; its full sequence is MTAQFPPPVPDTEQRLLSHEELEAALRDIGARRYHNLHPFHRLLHDGKLSKDQVRAWALNRYYYQAMIPVKDAALLARLPDAQLRRIWRQRIVDHDGDHEGDGGIERWLKLAEGVGFTRDYVLSTKGILSATRFSVDAYVHFVSERSLLEAIASSLTEMFSPTIISERVAGMLKNYDFITKDTLAYFDKRLTQAPRDADFALDYVKRHATTPEMQRAAIDALTFKCNVLWTQLDALYFAYVAPGMVPPDAWQPGEGLVAETNSAEDSPAAAASPAATTAEPTAFSGSDVPRLPRGVRLRFDEVRNKHVLLAPERTFDLDDNAVAVLKLVDGRNTVSQIAQILGQTYDADPAIIEADILPMLAGLAQKRVLER.

Residues 1–267 (MTAQFPPPVP…VAETNSAEDS (267 aa)) are pqqC. Residues 260–288 (ETNSAEDSPAAAASPAATTAEPTAFSGSD) form a disordered region. Over residues 264 to 283 (AEDSPAAAASPAATTAEPTA) the composition is skewed to low complexity. Positions 268-280 (PAAAASPAATTAE) are linker. A pqqD region spans residues 281–372 (PTAFSGSDVP…GLAQKRVLER (92 aa)).

It in the N-terminal section; belongs to the PqqC family. The protein in the C-terminal section; belongs to the PqqD family. In terms of assembly, monomer. Interacts with PqqE.

It carries out the reaction 6-(2-amino-2-carboxyethyl)-7,8-dioxo-1,2,3,4,7,8-hexahydroquinoline-2,4-dicarboxylate + 3 O2 = pyrroloquinoline quinone + 2 H2O2 + 2 H2O + H(+). It functions in the pathway cofactor biosynthesis; pyrroloquinoline quinone biosynthesis. In terms of biological role, the PqqC region is involved in ring cyclization and eight-electron oxidation of 3a-(2-amino-2-carboxyethyl)-4,5-dioxo-4,5,6,7,8,9-hexahydroquinoline-7,9-dicarboxylic-acid to PQQ. Functionally, the PqqD region functions as a PqqA binding domain and presents PqqA to PqqE. The polypeptide is Bifunctional coenzyme PQQ synthesis protein C/D (pqqCD) (Methylorubrum extorquens (strain ATCC 14718 / DSM 1338 / JCM 2805 / NCIMB 9133 / AM1) (Methylobacterium extorquens)).